The chain runs to 407 residues: MQQKAFEESRYPWQESFENVAVCLPLRCPRCGDHTRFRSLSSLRAHLEFSHSYEERTLLTKCSLFPSLKDTDLVTSSELLKPGKLQSSGNVVKQKPSYVNLYSISHEHSKDRKPFEVVAERPVSYVQTYTAMDLHADSLDGTRSGPGLPTSDTKASFEAHVREKFNRMVEAVDRTIEKRIDKLTKELAQKTAELLEVRAAFVQLTQKKQEVQRRERALNRQVDVAVEMIAVLRQRLTESEEELLRKEEEVVTFNHFLEAAAEKEVQGKARLQDFIENLLQRVELAEKQLEYYQSQQASGFVRDLSGHVLTDISSNRKPKCLSRGHPHSVCNHPDLKAHFHPKGRNHLKKAKDDRASMQPAKAIHEQAESSRDLCRPPKKGELLGFGRKGNIRPKMAKKKPTAIVNII.

A Phosphoserine modification is found at Ser16. The C2H2-type; degenerate zinc-finger motif lies at 26-51 (LRCPRCGDHTRFRSLSSLRAHLEFSH). Residue Ser138 is modified to Phosphoserine. A coiled-coil region spans residues 169-297 (VEAVDRTIEK…QLEYYQSQQA (129 aa)). The residue at position 175 (Thr175) is a Phosphothreonine. Residues 347–392 (LKKAKDDRASMQPAKAIHEQAESSRDLCRPPKKGELLGFGRKGNIR) form a disordered region. Residues 362–381 (AIHEQAESSRDLCRPPKKGE) show a composition bias toward basic and acidic residues. A Phosphoserine modification is found at Ser369.

As to quaternary structure, homodimer. Interacts with NDE1 and NDEL1. Does not interact with TUBG1. Interacts with DISC1. Interacts with PARP1. Interacts with MCRS1. In terms of tissue distribution, isoform 1 is expressed in brain. Isoform 2 is expressed in placenta and at low level in lung and liver. Isoform 3 is expressed in kidney and pancreas. Isoform 1 is expressed exclusively in brain.

The protein localises to the cytoplasm. The protein resides in the cytoskeleton. It localises to the microtubule organizing center. It is found in the centrosome. Its function is as follows. Involved in the regulation of neurogenesis. Negatively regulates neurite outgrowth. Involved in the morphogenesis of basket cells in the somatosensory cortex during embryogenesis. Involved in the positive regulation of oligodendrocyte differentiation during postnatal growth. Involved in dendritic arborization, morphogenesis of spine density dendrite, and establishment of postsynaptic dendrite density in cortical pyramidal neurons. Involved in homologous recombination (HR) repair pathway. Required for proper resolution of DNA double-strand breaks (DSBs) by HR. Is required for recovery of stalled replication forks, and directly contributes to genomic stability. Interacts with PARP1 and mediates MRE11-dependent DNA end resection during replication fork recovery. Contributes to genomic stability by preventing telomere dysfunction. This is Protein ZNF365 (ZNF365) from Homo sapiens (Human).